The chain runs to 306 residues: Curved DNA-binding protein (306 aa).

Residues Asp5–Trp69 form the J domain.

The protein localises to the cytoplasm. The protein resides in the nucleoid. Its function is as follows. DNA-binding protein that preferentially recognizes a curved DNA sequence. It is probably a functional analog of DnaJ; displays overlapping activities with DnaJ, but functions under different conditions, probably acting as a molecular chaperone in an adaptive response to environmental stresses other than heat shock. Lacks autonomous chaperone activity; binds native substrates and targets them for recognition by DnaK. Its activity is inhibited by the binding of CbpM. This Escherichia coli O17:K52:H18 (strain UMN026 / ExPEC) protein is Curved DNA-binding protein.